The primary structure comprises 507 residues: Protein disulfide-isomerase (507 aa).

Residues 1–20 (MASMVSFCFLLLFLAFFASS) form the signal peptide. The Thioredoxin 1 domain maps to 21 to 144 (FNEIYAEESE…IVDYLKKQSG (124 aa)). Active-site nucleophile residues include cysteine 62 and cysteine 65. Cysteine 62 and cysteine 65 are disulfide-bonded. 2 N-linked (GlcNAc...) asparagine glycosylation sites follow: asparagine 181 and asparagine 278. Residues 365 to 485 (YRKSEPIPEH…FIEFIEKNRE (121 aa)) enclose the Thioredoxin 2 domain. Active-site nucleophile residues include cysteine 407 and cysteine 410. An intrachain disulfide couples cysteine 407 to cysteine 410. The interval 484–507 (REKSSKKESIVKDDQTDSETKAEL) is disordered. The short motif at 504 to 507 (KAEL) is the Prevents secretion from ER element.

Belongs to the protein disulfide isomerase family.

The protein localises to the endoplasmic reticulum lumen. The enzyme catalyses Catalyzes the rearrangement of -S-S- bonds in proteins.. Participates in the folding of proteins containing disulfide bonds, may be involved in glycosylation, prolyl hydroxylation and triglyceride transfer. This chain is Protein disulfide-isomerase (PDI), found in Datisca glomerata (Durango root).